The sequence spans 437 residues: Trigger factor (437 aa).

Residues 164-249 (GDFAKFDFEG…LHEIQCKKIG (86 aa)) enclose the PPIase FKBP-type domain.

It belongs to the FKBP-type PPIase family. Tig subfamily.

The protein resides in the cytoplasm. It catalyses the reaction [protein]-peptidylproline (omega=180) = [protein]-peptidylproline (omega=0). Involved in protein export. Acts as a chaperone by maintaining the newly synthesized protein in an open conformation. Functions as a peptidyl-prolyl cis-trans isomerase. In Campylobacter hominis (strain ATCC BAA-381 / DSM 21671 / CCUG 45161 / LMG 19568 / NCTC 13146 / CH001A), this protein is Trigger factor.